A 282-amino-acid polypeptide reads, in one-letter code: Phospholipid phosphatase 1 (282 aa).

Residues 1 to 6 (MFDKPR) lie on the Cytoplasmic side of the membrane. Residues 5-7 (PRL) carry the PDZ-binding; involved in localization to the apical cell membrane motif. A helical transmembrane segment spans residues 7–27 (LPYVVLDVICVLLAGLPFIIL). Topologically, residues 28 to 53 (TSRHTPFQRGVFCTDESIKYPYREDT) are extracellular. The helical transmembrane segment at 54–74 (IPYALLGGIVIPFCIIVMITG) threads the bilayer. Over 75–88 (ETLSVYFNVLHSNS) the chain is Cytoplasmic. Residues 89 to 109 (FVSNHYIATIYKAVGAFLFGA) traverse the membrane as a helical segment. The Extracellular segment spans residues 110 to 164 (SASQSLTDIAKYSIGRLRPHFLAVCNPDWSKINCSDGYIENFVCQGNEQKVREGR). Positions 120–128 (KYSIGRLRP) are phosphatase sequence motif I. N-linked (GlcNAc...) asparagine glycosylation occurs at Asn-142. The chain crosses the membrane as a helical span at residues 165 to 185 (LSFYSGHSSFSMYCMLFVALY). Positions 168 to 171 (YSGH) are phosphatase sequence motif II. The Proton donors role is filled by His-171. Topologically, residues 186-194 (LQARMKGDW) are cytoplasmic. The helical transmembrane segment at 195-215 (ARLLRPMLQFGLVALSIYVGL) threads the bilayer. Residues 216–227 (SRVSDYKHHWSD) form a phosphatase sequence motif III region. Residues 216–229 (SRVSDYKHHWSDVL) lie on the Extracellular side of the membrane. Catalysis depends on His-223, which acts as the Nucleophile. The helical transmembrane segment at 230 to 250 (IGLIQGAVVAILVVLYVTDFF) threads the bilayer. At 251–282 (KTTESNKERKEDSHTTLHETTNRQSYARNHEP) the chain is on the cytoplasmic side. The span at 257-271 (KERKEDSHTTLHETT) shows a compositional bias: basic and acidic residues. Residues 257 to 282 (KERKEDSHTTLHETTNRQSYARNHEP) form a disordered region. Polar residues predominate over residues 272-282 (NRQSYARNHEP).

It belongs to the PA-phosphatase related phosphoesterase family. As to quaternary structure, forms functional homodimers and homooligomers that are not required for substrate recognition and catalytic activity. Can also form heterooligomers with PLPP2 and PLPP3. Post-translationally, N-glycosylated. N-linked sugars are of the complex type. N-glycosylation is not required for the phosphatase activity.

The protein resides in the cell membrane. The protein localises to the apical cell membrane. It localises to the membrane raft. Its subcellular location is the membrane. It is found in the caveola. It catalyses the reaction a 1,2-diacyl-sn-glycero-3-phosphate + H2O = a 1,2-diacyl-sn-glycerol + phosphate. The catalysed reaction is 1,2-dihexadecanoyl-sn-glycero-3-phosphate + H2O = 1,2-dihexadecanoyl-sn-glycerol + phosphate. It carries out the reaction 1,2-di-(9Z-octadecenoyl)-sn-glycero-3-phosphate + H2O = 1,2-di-(9Z-octadecenoyl)-sn-glycerol + phosphate. The enzyme catalyses a monoacyl-sn-glycero-3-phosphate + H2O = a monoacylglycerol + phosphate. It catalyses the reaction (9Z)-octadecenoyl-sn-glycero-3-phosphate + H2O = (9Z-octadecenoyl)-glycerol + phosphate. The catalysed reaction is a 1-acyl-sn-glycero-3-phosphate + H2O = a 1-acyl-sn-glycerol + phosphate. It carries out the reaction 1-(9Z-octadecenoyl)-sn-glycero-3-phosphate + H2O = 1-(9Z-octadecenoyl)-sn-glycerol + phosphate. The enzyme catalyses a 1,2-diacyl-sn-glycerol 3-diphosphate + H2O = a 1,2-diacyl-sn-glycero-3-phosphate + phosphate + H(+). It catalyses the reaction sphing-4-enine 1-phosphate + H2O = sphing-4-enine + phosphate. The catalysed reaction is an N-acylsphing-4-enine 1-phosphate + H2O = an N-acylsphing-4-enine + phosphate. It carries out the reaction N-(octanoyl)-sphing-4-enine-1-phosphate + H2O = N-octanoylsphing-4-enine + phosphate. The enzyme catalyses N-(9Z-octadecenoyl)-ethanolamine phosphate + H2O = N-(9Z-octadecenoyl) ethanolamine + phosphate. It catalyses the reaction 1-hexadecanoyl-2-(9Z-octadecenoyl)-sn-glycero-3-phosphate + H2O = 1-hexadecanoyl-2-(9Z-octadecenoyl)-sn-glycerol + phosphate. It participates in lipid metabolism; phospholipid metabolism. Magnesium-independent phospholipid phosphatase. Insensitive to N-ethylmaleimide. In terms of biological role, magnesium-independent phospholipid phosphatase of the plasma membrane that catalyzes the dephosphorylation of a variety of glycerolipid and sphingolipid phosphate esters including phosphatidate/PA, lysophosphatidate/LPA, diacylglycerol pyrophosphate/DGPP, sphingosine 1-phosphate/S1P and ceramide 1-phosphate/C1P. Also acts on N-oleoyl ethanolamine phosphate/N-(9Z-octadecenoyl)-ethanolamine phosphate, a potential physiological compound. Through its extracellular phosphatase activity allows both the hydrolysis and the cellular uptake of these bioactive lipid mediators from the milieu, regulating signal transduction in different cellular processes. It is for instance essential for the extracellular hydrolysis of S1P and subsequent conversion into intracellular S1P. Involved in the regulation of inflammation, platelets activation, cell proliferation and migration among other processes. May also have an intracellular activity to regulate phospholipid-mediated signaling pathways. The chain is Phospholipid phosphatase 1 from Rattus norvegicus (Rat).